The following is a 217-amino-acid chain: Deoxyribose-phosphate aldolase (217 aa).

The active-site Proton donor/acceptor is Asp-90. Lys-152 functions as the Schiff-base intermediate with acetaldehyde in the catalytic mechanism. Lys-181 functions as the Proton donor/acceptor in the catalytic mechanism.

This sequence belongs to the DeoC/FbaB aldolase family. DeoC type 1 subfamily.

The protein resides in the cytoplasm. It carries out the reaction 2-deoxy-D-ribose 5-phosphate = D-glyceraldehyde 3-phosphate + acetaldehyde. It functions in the pathway carbohydrate degradation; 2-deoxy-D-ribose 1-phosphate degradation; D-glyceraldehyde 3-phosphate and acetaldehyde from 2-deoxy-alpha-D-ribose 1-phosphate: step 2/2. Functionally, catalyzes a reversible aldol reaction between acetaldehyde and D-glyceraldehyde 3-phosphate to generate 2-deoxy-D-ribose 5-phosphate. In Metamycoplasma hominis (Mycoplasma hominis), this protein is Deoxyribose-phosphate aldolase.